The sequence spans 86 residues: Weak toxin 3 (86 aa).

A signal peptide spans 1–23 (MKTLLLTLVVVTIVCLDLGYTLT). Cystine bridges form between Cys24–Cys45, Cys27–Cys32, Cys38–Cys63, Cys67–Cys78, and Cys79–Cys84.

This sequence belongs to the three-finger toxin family. Ancestral subfamily. Orphan group II sub-subfamily. In terms of tissue distribution, expressed by the venom gland.

It localises to the secreted. Functionally, binds with low affinity to muscular (alpha-1-beta-1-delta-epsilon/CHRNA1-CHRNB1-CHRND-CHRNE) and very low affinity to neuronal (alpha-7/CHRNA7) nicotinic acetylcholine receptor (nAChR). This chain is Weak toxin 3, found in Bungarus candidus (Malayan krait).